Here is a 317-residue protein sequence, read N- to C-terminus: Melanocyte-stimulating hormone receptor (317 aa).

Topologically, residues 1-37 (MPVQGSQRRLLGSLNSTPTATPKLGLAANQTGAQCLE) are extracellular. N-linked (GlcNAc...) asparagine glycosylation occurs at N29. Residues 38–63 (VSIPDGLFLSLGLVSLVENVLVVAAI) form a helical membrane-spanning segment. Residues 64–72 (ARNRNLHSP) are Cytoplasmic-facing. A helical membrane pass occupies residues 73–93 (MYCFICCLALSDLLVSGSNML). Over 94–118 (ETAVILLLEAGALAARAAVVQQLDN) the chain is Extracellular. Residues 119 to 140 (VIDVITCSSMLSSLCFLGAIAM) traverse the membrane as a helical segment. Topologically, residues 141–163 (DRYISIFYALRYHSIVTLPRARG) are cytoplasmic. A helical transmembrane segment spans residues 164–183 (VVAAIWVASILFSTLFIAYY). At 184–191 (DHVAVLLC) the chain is on the extracellular side. A helical membrane pass occupies residues 192–211 (LVVFFLAMLVLMAVLYVHML). Over 212–240 (ARACQHAQGIAQLHKRQRPAHQGVGLKGA) the chain is Cytoplasmic. Residues 241–266 (ATLTILLGIFFLCWGPFFLHLTLIVL) form a helical membrane-spanning segment. Over 267–279 (CPQHPTCSCIFKN) the chain is Extracellular. Residues 280–300 (FNLFLALIICNAIIDPLIYAF) form a helical membrane-spanning segment. The Cytoplasmic portion of the chain corresponds to 301–317 (RSQELRRTLKKVLLCSW). The S-palmitoyl cysteine moiety is linked to residue C315.

Belongs to the G-protein coupled receptor 1 family. As to quaternary structure, interacts with MGRN1, but does not undergo MGRN1-mediated ubiquitination; this interaction competes with GNAS-binding and thus inhibits agonist-induced cAMP production. Interacts with OPN3; the interaction results in a decrease in MC1R-mediated cAMP signaling and ultimately a decrease in melanin production in melanocytes.

The protein resides in the cell membrane. Its function is as follows. Receptor for MSH (alpha, beta and gamma) and ACTH. The activity of this receptor is mediated by G proteins which activate adenylate cyclase. Mediates melanogenesis, the production of eumelanin (black/brown) and phaeomelanin (red/yellow), via regulation of cAMP signaling in melanocytes. This chain is Melanocyte-stimulating hormone receptor (MC1R), found in Presbytis comata (Grizzled leaf monkey).